Here is a 364-residue protein sequence, read N- to C-terminus: Protein-glutamate methylesterase/protein-glutamine glutaminase (364 aa).

A Response regulatory domain is found at 7–124 (RALIVDDSAL…SQNMPDMAEE (118 aa)). A 4-aspartylphosphate modification is found at D58. One can recognise a CheB-type methylesterase domain in the interval 167-364 (ETTSFVRNVL…MAEEIVKIIS (198 aa)). Active-site residues include S181, H208, and D308.

This sequence belongs to the CheB family. Post-translationally, phosphorylated by CheA. Phosphorylation of the N-terminal regulatory domain activates the methylesterase activity.

Its subcellular location is the cytoplasm. The enzyme catalyses [protein]-L-glutamate 5-O-methyl ester + H2O = L-glutamyl-[protein] + methanol + H(+). It catalyses the reaction L-glutaminyl-[protein] + H2O = L-glutamyl-[protein] + NH4(+). In terms of biological role, involved in chemotaxis. Part of a chemotaxis signal transduction system that modulates chemotaxis in response to various stimuli. Catalyzes the demethylation of specific methylglutamate residues introduced into the chemoreceptors (methyl-accepting chemotaxis proteins or MCP) by CheR. Also mediates the irreversible deamidation of specific glutamine residues to glutamic acid. The polypeptide is Protein-glutamate methylesterase/protein-glutamine glutaminase (Methanosarcina barkeri (strain Fusaro / DSM 804)).